Reading from the N-terminus, the 212-residue chain is Ribonuclease HII (212 aa).

The RNase H type-2 domain maps to 1-205 (MTICGVDEAG…VQDILDRASQ (205 aa)). 3 residues coordinate a divalent metal cation: Asp-7, Glu-8, and Asp-100.

Belongs to the RNase HII family. It depends on Mn(2+) as a cofactor. Requires Mg(2+) as cofactor.

The protein resides in the cytoplasm. It catalyses the reaction Endonucleolytic cleavage to 5'-phosphomonoester.. In terms of biological role, endonuclease that specifically degrades the RNA of RNA-DNA hybrids. This Methanocorpusculum labreanum (strain ATCC 43576 / DSM 4855 / Z) protein is Ribonuclease HII.